Here is a 213-residue protein sequence, read N- to C-terminus: Probable GTP-binding protein EngB (213 aa).

Positions 25–203 (EGTEVAFAGR…EDVLNGWLLP (179 aa)) constitute an EngB-type G domain. GTP-binding positions include 33-40 (GRSNAGKS), 60-64 (GRTQL), 80-83 (DLPG), 147-150 (TKAD), and 179-184 (AQMFSA). Mg(2+) is bound by residues S40 and T62.

This sequence belongs to the TRAFAC class TrmE-Era-EngA-EngB-Septin-like GTPase superfamily. EngB GTPase family. The cofactor is Mg(2+).

In terms of biological role, necessary for normal cell division and for the maintenance of normal septation. The chain is Probable GTP-binding protein EngB from Saccharophagus degradans (strain 2-40 / ATCC 43961 / DSM 17024).